A 151-amino-acid polypeptide reads, in one-letter code: Large ribosomal subunit protein bL9 (151 aa).

The protein belongs to the bacterial ribosomal protein bL9 family.

In terms of biological role, binds to the 23S rRNA. This chain is Large ribosomal subunit protein bL9, found in Thermosipho africanus (strain TCF52B).